A 376-amino-acid chain; its full sequence is GDSL esterase/lipase At5g55050 (376 aa).

The first 29 residues, 1–29 (MPTNNTPFLTIFLLFLGLLRFDSFPGLEA), serve as a signal peptide directing secretion. The Nucleophile role is filled by serine 46. N-linked (GlcNAc...) asparagine glycosylation is found at asparagine 134 and asparagine 245. Residues aspartate 340 and histidine 344 contribute to the active site.

This sequence belongs to the 'GDSL' lipolytic enzyme family.

The protein localises to the secreted. The sequence is that of GDSL esterase/lipase At5g55050 from Arabidopsis thaliana (Mouse-ear cress).